The chain runs to 622 residues: WD repeat-containing protein 46 (622 aa).

The segment at 1-135 is disordered; the sequence is METAPKPGRG…KTQSKLEKAE (135 aa). Residue S41 is modified to Phosphoserine. Basic and acidic residues predominate over residues 106–118; sequence EEARKFCRIDKSK. WD repeat units lie at residues 192-233, 234-271, 314-353, 356-395, and 398-435; these read LRQF…CEIN, VMEAVRDIHFLHSEALLAVAQNRWLYIYDNQGIELHCI, VRAGRLSVMAQNPYNAVIHLGHSNGTVSLWSPAVKEPLAK, CHRGGVRAVAVDSTGTYMATSGLDHQLKIFDLRGTFQPLS, and TLPQGAGHLAFSQRGLLVAGMGDVVNIWAGQGKASPPS. A disordered region spans residues 547-622; sequence AAFQPKAKQK…AREGGLQVDP (76 aa). A compositionally biased stretch (basic and acidic residues) spans 571–582; that stretch reads VMDQEHRDKVRQ.

As to quaternary structure, part of the small subunit (SSU) processome, composed of more than 70 proteins and the RNA chaperone small nucleolar RNA (snoRNA) U3. Interacts with DDX21, NCL, NOP2 and EBNA1BP2.

It localises to the nucleus. The protein localises to the nucleolus. In terms of biological role, scaffold component of the nucleolar structure. Required for localization of DDX21 and NCL to the granular compartment of the nucleolus. Part of the small subunit (SSU) processome, first precursor of the small eukaryotic ribosomal subunit. During the assembly of the SSU processome in the nucleolus, many ribosome biogenesis factors, an RNA chaperone and ribosomal proteins associate with the nascent pre-rRNA and work in concert to generate RNA folding, modifications, rearrangements and cleavage as well as targeted degradation of pre-ribosomal RNA by the RNA exosome. In Mus musculus (Mouse), this protein is WD repeat-containing protein 46 (Wdr46).